Here is a 170-residue protein sequence, read N- to C-terminus: Myosin regulatory light chain 2, skeletal muscle isoform type 1 (170 aa).

A N,N,N-trimethylalanine modification is found at A2. S16 and S17 each carry phosphoserine. Phosphothreonine is present on residues T26 and T36. One can recognise an EF-hand 1 domain in the interval 26-61 (TQIQEFKEAFTVIDQNRDGIIDKEDLRDTFAAMGRL). Ca(2+) is bound by residues D39, N41, D43, and D50. Phosphoserine is present on S76. EF-hand domains lie at 96-131 (DPED…QCDR) and 132-167 (FSQE…GDAK). T102 is modified (phosphothreonine).

Myosin is a hexamer of 2 heavy chains and 4 light chains.

This Oryctolagus cuniculus (Rabbit) protein is Myosin regulatory light chain 2, skeletal muscle isoform type 1.